The chain runs to 121 residues: Small ribosomal subunit protein uS13 (121 aa).

Positions 91–121 (HRKGLPLRGQRTRTNARTRKGPRKAGVALKK) are disordered.

It belongs to the universal ribosomal protein uS13 family. Part of the 30S ribosomal subunit. Forms a loose heterodimer with protein S19. Forms two bridges to the 50S subunit in the 70S ribosome.

Located at the top of the head of the 30S subunit, it contacts several helices of the 16S rRNA. In the 70S ribosome it contacts the 23S rRNA (bridge B1a) and protein L5 of the 50S subunit (bridge B1b), connecting the 2 subunits; these bridges are implicated in subunit movement. Contacts the tRNAs in the A and P-sites. This is Small ribosomal subunit protein uS13 from Cupriavidus pinatubonensis (strain JMP 134 / LMG 1197) (Cupriavidus necator (strain JMP 134)).